We begin with the raw amino-acid sequence, 964 residues long: Adhesion defective protein 3 (964 aa).

Residues 1–32 form a disordered region; sequence MADFMDIEPSSHSAKASQYESSAPASSSLGNS. A compositionally biased stretch (low complexity) spans 16–32; that stretch reads ASQYESSAPASSSLGNS. A LisH domain is found at 34–66; the sequence is PNESLDYYIYDYFVKHNFEEAAQAFLRESKIQI. A compositionally biased stretch (low complexity) spans 69–83; the sequence is SSSSTAFSPSNNNAP. Disordered stretches follow at residues 69-125, 241-273, 476-523, 572-596, and 664-914; these read SSSS…EETN, PKGTPSTSIEGAKTSIPPSHAMQNPHNSFPASA, VSMK…TSRM, QTLSSGNQPPQQSGPNPNEFSMSMD, and APMI…KPIS. 3 stretches are compositionally biased toward polar residues: residues 93-103, 261-270, and 508-523; these read LASPSKISESI, AMQNPHNSFP, and TQANGSRYMNPSTSRM. Over residues 575–589 the composition is skewed to low complexity; it reads SSGNQPPQQSGPNPN. 6 stretches are compositionally biased toward polar residues: residues 664–700, 707–716, 724–752, 767–801, 818–828, and 857–868; these read APMIQPNVPVSANSPAQANTPAADSTKSGTIQPTNRN, SPHQQFSPSA, RSMSPFVSQQQQLNQPVSNKPDGLTQNKE, AFPQSRTSWMMPQSFDTSSLNAPGAKDSSSFSSLH, TIRTTERSTFS, and GGTNSISQDTTQ. Positions 869 to 885 are enriched in low complexity; that stretch reads SLQMQSNSVNSSSMVDA. Positions 894–905 are enriched in polar residues; sequence GDTSALDSNAKN.

The protein belongs to the FLO8 family.

It is found in the cytoplasm. Its subcellular location is the nucleus. In terms of biological role, probable transcriptional regulator involved in cell adhesion. The chain is Adhesion defective protein 3 (adn3) from Schizosaccharomyces pombe (strain 972 / ATCC 24843) (Fission yeast).